Reading from the N-terminus, the 254-residue chain is uncharacterized protein (254 aa).

5 helical membrane-spanning segments follow: residues 33-53 (MLWVGVFIHLLYNKSLLLFFI), 70-90 (FNKLVYIGVFLFLLSFILFKS), 92-112 (FALSFLVFYLIGIFLYYLNFM), 133-153 (FIIFLNAILFVIPYCIFILLI), and 223-243 (FLVFICLSYILYIVSPFPLIF).

To M.jannaschii MJ0902.

The protein resides in the cell membrane. This is an uncharacterized protein from Methanocaldococcus jannaschii (strain ATCC 43067 / DSM 2661 / JAL-1 / JCM 10045 / NBRC 100440) (Methanococcus jannaschii).